The chain runs to 34 residues: MSDIN-like toxin proprotein 2 (34 aa).

The propeptide occupies 1-10 (MSDINTARLP). The segment at residues 11-20 (FYQFPDFKYP) is a cross-link (cyclopeptide (Phe-Pro)). Residues 21–34 (CVGDDIEMVLARGE) constitute a propeptide that is removed on maturation.

It belongs to the MSDIN fungal toxin family. In terms of processing, processed by the macrocyclase-peptidase enzyme POPB to yield a toxic cyclic decapeptide. POPB first removes 10 residues from the N-terminus. Conformational trapping of the remaining peptide forces the enzyme to release this intermediate rather than proceed to macrocyclization. The enzyme rebinds the remaining peptide in a different conformation and catalyzes macrocyclization of the N-terminal 10 residues.

Its function is as follows. Probable toxin that belongs to the MSDIN-like toxin family responsible for a large number of food poisoning cases and deaths. The sequence is that of MSDIN-like toxin proprotein 2 from Amanita bisporigera (Destroying angel).